The following is a 404-amino-acid chain: Alanine racemase (404 aa).

Residue Lys-34 is the Proton acceptor; specific for D-alanine of the active site. Residue Lys-34 is modified to N6-(pyridoxal phosphate)lysine. Residue Arg-133 coordinates substrate. The RPE1 insert domain occupies 226-273 (EVSSNLSYTEEFESNTAALTTTACINKCPDVSVRLTPKLPLKGSYTVR). The Proton acceptor; specific for L-alanine role is filled by Tyr-298. Met-346 contacts substrate.

This sequence belongs to the alanine racemase family. The cofactor is pyridoxal 5'-phosphate.

It catalyses the reaction L-alanine = D-alanine. The protein operates within amino-acid biosynthesis; D-alanine biosynthesis; D-alanine from L-alanine: step 1/1. Catalyzes the interconversion of L-alanine and D-alanine. May also act on other amino acids. The protein is Alanine racemase (alr) of Rickettsia prowazekii (strain Madrid E).